A 193-amino-acid polypeptide reads, in one-letter code: Acyl carrier protein phosphodiesterase (193 aa).

This sequence belongs to the AcpH family.

It carries out the reaction holo-[ACP] + H2O = apo-[ACP] + (R)-4'-phosphopantetheine + H(+). Converts holo-ACP to apo-ACP by hydrolytic cleavage of the phosphopantetheine prosthetic group from ACP. This Escherichia coli O7:K1 (strain IAI39 / ExPEC) protein is Acyl carrier protein phosphodiesterase.